Here is a 67-residue protein sequence, read N- to C-terminus: Small ribosomal subunit protein eS31 (67 aa).

Residues C31, C34, C49, and C52 each contribute to the Zn(2+) site. Residues 31-52 (CPKCGAGVFMAEHLNRFACGKC) form a C4-type zinc finger.

The protein belongs to the eukaryotic ribosomal protein eS31 family. In terms of assembly, part of the 30S ribosomal subunit. Requires Zn(2+) as cofactor.

The sequence is that of Small ribosomal subunit protein eS31 from Methanococcus maripaludis (strain DSM 14266 / JCM 13030 / NBRC 101832 / S2 / LL).